Reading from the N-terminus, the 957-residue chain is Collagen alpha-1(XXI) chain (957 aa).

The first 16 residues, 1 to 16 (MPGIIYILCSILLIES), serve as a signal peptide directing secretion. The 175-residue stretch at 37–211 (DLVFILDGSW…RIREIMKQKL (175 aa)) folds into the VWFA domain. The Laminin G-like domain occupies 230–412 (GFDILLGLGI…LQKLRIYCDP (183 aa)). Disordered stretches follow at residues 441-788 (PAPC…GKEQ) and 820-935 (CKTQ…DAGI). Collagen-like domains follow at residues 448 to 501 (PGEK…PRGF), 502 to 543 (AGLK…DKGD), 544 to 591 (IGID…EEGK), 592 to 642 (PGPP…ISGP), 643 to 684 (EGIS…IPGQ), 685 to 741 (QGYT…EIGE), 742 to 786 (HGHR…QQGK), and 825 to 882 (GSPG…GNKG). The segment covering 483–498 (TSGSPGIPGSPGVQGP) has biased composition (low complexity). Residues 535–556 (MGPKGDKGDIGIDGKKGTKGDK) show a composition bias toward basic and acidic residues. Composition is skewed to low complexity over residues 597–616 (MEGL…DGAN) and 633–649 (PTGT…SGPQ). The segment covering 733–744 (KGEKGEIGEHGH) has biased composition (basic and acidic residues). The span at 775 to 786 (QGLPGPKGQQGK) shows a compositional bias: low complexity.

Belongs to the fibril-associated collagens with interrupted helices (FACIT) family.

The protein resides in the secreted. It is found in the extracellular space. Its subcellular location is the extracellular matrix. The protein localises to the cytoplasm. The polypeptide is Collagen alpha-1(XXI) chain (col21a1) (Xenopus laevis (African clawed frog)).